The primary structure comprises 73 residues: UPF0235 protein SYO3AOP1_0257 (73 aa).

It belongs to the UPF0235 family.

This chain is UPF0235 protein SYO3AOP1_0257, found in Sulfurihydrogenibium sp. (strain YO3AOP1).